The following is an 832-amino-acid chain: Cadherin-17 (832 aa).

The N-terminal stretch at 1-22 (MILQAHLHSLCLLMLYLATGYG) is a signal peptide. Residues 23 to 787 (QEGKFSGPLK…HQTGIPTVGM (765 aa)) are Extracellular-facing. 7 Cadherin domains span residues 30–128 (PLKP…TFLQ), 129–244 (SKYE…APKP), 245–340 (VEMV…PPTC), 341–449 (PSPV…IPIF), 450–566 (EKSD…APQF), 567–667 (SQHV…PPRL), and 668–777 (AKDY…RPAG). 8 N-linked (GlcNAc...) asparagine glycosylation sites follow: Asn-149, Asn-184, Asn-250, Asn-419, Asn-456, Asn-546, Asn-587, and Asn-722. Residues 788–808 (AVGILLTTLLVIGIILAVVFI) form a helical membrane-spanning segment. Topologically, residues 809–832 (RIKKDKGKDNVESAQASEVKPLRS) are cytoplasmic.

As to expression, expressed in the gastrointestinal tract and pancreatic duct. Not detected in kidney, lung, liver, brain, adrenal gland and skin.

It localises to the cell membrane. In terms of biological role, cadherins are calcium-dependent cell adhesion proteins. They preferentially interact with themselves in a homophilic manner in connecting cells; cadherins may thus contribute to the sorting of heterogeneous cell types. LI-cadherin may have a role in the morphological organization of liver and intestine. Involved in intestinal peptide transport. This chain is Cadherin-17 (CDH17), found in Homo sapiens (Human).